A 457-amino-acid polypeptide reads, in one-letter code: Acetylcholine receptor subunit alpha-1-A (457 aa).

A signal peptide spans 1-20 (MDFVLTRLILLFLAATIIYS). Residues 21–230 (SEDESRLIND…ITYHFLLQRL (210 aa)) lie on the Extracellular side of the membrane. 2 disulfides stabilise this stretch: C148/C162 and C212/C213. N161 carries N-linked (GlcNAc...) asparagine glycosylation. A run of 3 helical transmembrane segments spans residues 231-255 (PLYF…VFYL), 263-281 (ITLS…LVIV), and 297-316 (YMLF…VIVI). At 317-428 (NTHHRSPSTH…WKFVAMVLDH (112 aa)) the chain is on the cytoplasmic side. A helical transmembrane segment spans residues 429–447 (LLLAVFMIVCIIGTLAIFA).

Belongs to the ligand-gated ion channel (TC 1.A.9) family. Acetylcholine receptor (TC 1.A.9.1) subfamily. Alpha-1/CHRNA1 sub-subfamily. As to quaternary structure, one of the alpha chains that assemble within the acetylcholine receptor, a pentamer of two alpha chains, a beta, a delta, and a gamma or epsilon chains. Oocytes.

The protein localises to the postsynaptic cell membrane. Its subcellular location is the cell membrane. The catalysed reaction is K(+)(in) = K(+)(out). It catalyses the reaction Na(+)(in) = Na(+)(out). Functionally, upon acetylcholine binding, the AChR responds by an extensive change in conformation that affects all subunits and leads to opening of an ion-conducting channel across the plasma membrane. The protein is Acetylcholine receptor subunit alpha-1-A (chrna1-a) of Xenopus laevis (African clawed frog).